A 402-amino-acid polypeptide reads, in one-letter code: MTDVKNDVNVSSVVDADGLIEGNYDQVVESFDDMELKEELLRGIYGFGFEKPSAIQKRAIVPCTTGKDVIAQAQSGTGKTATFSVSILQRIDHEDPHVQALVMAPTRELAQQIQKVMSALGEYLNVNILPCIGGTSVRDDQRKLEAGIHVVVGTPGRVGDMINRNALDTSRIKMFVLDEADEMLSRGFKDQIYEVFRSMPQDVQVVLLSATMPSEVLDVTNRFMRNPIRILVKKDELTLEGIRQFYINVQKDEWKFDCLCDLYNVVNVTQAVIFCNTRRKVDTLTEKMTENQFTVSCLHGDMDQAERDTIMREFRSGSSRVLITTDILARGIDVQQVSLVINYDLPSNRENYIHRIGRSGRFGRKGVAINFVTENDARQLKEIESYYTTQIEEMPESIADLI.

The short motif at Glu29–Lys57 is the Q motif element. The Helicase ATP-binding domain occupies Ile60–Ile230. Ala73–Thr80 serves as a coordination point for ATP. A DEAD box motif is present at residues Asp178–Asp181. A Helicase C-terminal domain is found at Gly241–Ile402.

Belongs to the DEAD box helicase family. eIF4A subfamily. EIF4F is a multi-subunit complex, the composition of which varies with external and internal environmental conditions. It is composed of at least EIF4A, EIF4E and EIF4G.

It catalyses the reaction ATP + H2O = ADP + phosphate + H(+). In terms of biological role, ATP-dependent RNA helicase which is a subunit of the eIF4F complex involved in cap recognition and is required for mRNA binding to ribosome. In the current model of translation initiation, eIF4A unwinds RNA secondary structures in the 5'-UTR of mRNAs which is necessary to allow efficient binding of the small ribosomal subunit, and subsequent scanning for the initiator codon. The sequence is that of Eukaryotic initiation factor 4A (inf-1) from Caenorhabditis elegans.